The sequence spans 159 residues: 2-C-methyl-D-erythritol 2,4-cyclodiphosphate synthase (159 aa).

A divalent metal cation-binding residues include aspartate 10 and histidine 12. Residues aspartate 10 to histidine 12 and histidine 36 to serine 37 each bind 4-CDP-2-C-methyl-D-erythritol 2-phosphate. Residue histidine 44 participates in a divalent metal cation binding. 4-CDP-2-C-methyl-D-erythritol 2-phosphate-binding positions include aspartate 58 to glycine 60, phenylalanine 63 to aspartate 67, alanine 102 to alanine 108, threonine 134 to glutamate 137, phenylalanine 141, and arginine 144.

This sequence belongs to the IspF family. Homotrimer. A divalent metal cation serves as cofactor.

The catalysed reaction is 4-CDP-2-C-methyl-D-erythritol 2-phosphate = 2-C-methyl-D-erythritol 2,4-cyclic diphosphate + CMP. The protein operates within isoprenoid biosynthesis; isopentenyl diphosphate biosynthesis via DXP pathway; isopentenyl diphosphate from 1-deoxy-D-xylulose 5-phosphate: step 4/6. Functionally, involved in the biosynthesis of isopentenyl diphosphate (IPP) and dimethylallyl diphosphate (DMAPP), two major building blocks of isoprenoid compounds. Catalyzes the conversion of 4-diphosphocytidyl-2-C-methyl-D-erythritol 2-phosphate (CDP-ME2P) to 2-C-methyl-D-erythritol 2,4-cyclodiphosphate (ME-CPP) with a corresponding release of cytidine 5-monophosphate (CMP). The protein is 2-C-methyl-D-erythritol 2,4-cyclodiphosphate synthase of Shewanella sp. (strain ANA-3).